We begin with the raw amino-acid sequence, 136 residues long: Antistasin (136 aa).

An N-terminal signal peptide occupies residues 1–17 (MIKLAILLLFTVAIVRC). Position 18 is a pyrrolidone carboxylic acid (Gln18). Cystine bridges form between Cys25-Cys36, Cys30-Cys43, Cys45-Cys65, Cys50-Cys68, Cys54-Cys70, Cys79-Cys90, Cys84-Cys97, Cys99-Cys120, Cys105-Cys123, and Cys109-Cys125. Residues 45–70 (CSGVRCRMHCPHGFQRSRYGCEFCKC) enclose the Antistasin-like 1 domain. The Antistasin-like 2 domain maps to 100–125 (KIDINCRKTCPNGLKRDKLGCEYCEC). Residues 114 to 117 (KRDK) and 128 to 135 (KRKLIPRL) contribute to the heparin site.

This sequence belongs to the protease inhibitor I15 (antistasin) family.

Its subcellular location is the secreted. Functionally, this highly disulfide-bonded protein is a potent inhibitor of factor Xa. May have therapeutic utility as an anticoagulant. Also exhibits a strong metastatic activity. The chain is Antistasin from Haementeria officinalis (Mexican leech).